The primary structure comprises 193 residues: Major structural subunit of bundle-forming pilus (193 aa).

Residues 1–13 (MVSKIMNKKYEKG) constitute a propeptide that is removed on maturation. The residue at position 14 (Leu-14) is an N-methylleucine. Residues 14–35 (LSLIESAMVLALAATVTAGVMF) form a helical membrane-spanning segment. Cys-129 and Cys-179 are joined by a disulfide.

Belongs to the N-Me-Phe pilin family. As to quaternary structure, 10 to 100 laterally aligned filaments or bundle-forming pili coalesce into rope-like bundles. These form linkages between the bacteria within the enteropathogenic E.coli (EPEC) microcolonies that are attached to epithelial cells.

It localises to the fimbrium. It is found in the membrane. Functionally, major repeating bundle-forming pilus (BFP) subunit. Is required for EPEC localized adherence. This Escherichia coli O111:H- protein is Major structural subunit of bundle-forming pilus (bfpA).